Consider the following 554-residue polypeptide: MVKVSLDNVKLLVDVDKEPFFKPSSTTVGDILTKDALEFIVLLHRTFNNKRKQLLENRQVVQKKLDSGSYHLDFLPETANIRNDPTWQGPILAPGLINRSTEITGPPLRNMLINALNAPVNTYMTDFEDSASPTWNNMVYGQVNLYDAIRNQIDFDTPRKSYKLNGNVANLPTIIVRPRGWHMVEKHLYVDDEPISASIFDFGLYFYHNAKELIKLGKGPYFYLPKMEHHLEAKLWNDVFCVAQDYIGIPRGTIRATVLIETLPAAFQMEEIIYQLRQHSSGLNCGRWDYIFSTIKRLRNDPNHILPNRDQVTMTSPFMDAYVKRLINTCHRRGVHAMGGMAAQIPIKDDPAANEKAMTKVRNDKIRELTNGHDGSWVAHPALAPICNEVFINMGTPNQIYFIPENVVTAANLLETKIPNGEITTEGIVQNLDIGLQYMEAWLRGSGCVPINNLMEDAATAEVSRCQLYQWVKHGVTLKDTGEKVTPELTEKILKEQVERLSKASPLGDKNKFALAAKYFLPEIRGEKFSEFLTTLLYDEIVSTKATPTDLSKL.

Arginine 177 serves as the catalytic Proton acceptor. The Proton donor role is filled by aspartate 457. The short motif at serine 552 to leucine 554 is the SKL peroxisome targeting motif element.

Belongs to the malate synthase family. As to quaternary structure, interacts with PEX9.

The protein resides in the peroxisome matrix. It catalyses the reaction glyoxylate + acetyl-CoA + H2O = (S)-malate + CoA + H(+). It functions in the pathway carbohydrate metabolism; glyoxylate cycle; (S)-malate from isocitrate: step 2/2. Its function is as follows. Malate synthase which takes part in the glyoxylate cycle. MLS1 activity is essential for cells to grow on oleic acid as a sole carbon source. Two steps of the glyoxylate cycle take place in the cytosol, the splitting of isocitrate into succinate and glyoxylate, and the dehydrogenation of malate to oxaloacetate. However, the formation of malate from glyoxylate and acetyl-CoA undertaken MLS1, occurs in the peroxisomes when cells are grown on oleic acid. The source of acetyl-CoA being either peroxisomal when breaking down fatty acids, or cytosolic when extra-cellular two-carbon substrates are used, therefore, although not strictly essential, the peroxisomal localization of MLS1 appears to be advantageous for cells growing on oleic acid, in that acetyl-CoA production and utilization are thereby intimately compartmentalized together to increase efficiency. This chain is Malate synthase 1, found in Saccharomyces cerevisiae (strain YJM789) (Baker's yeast).